The following is a 431-amino-acid chain: Enolase (431 aa).

Residues H157 and E166 each coordinate substrate. The Proton donor role is filled by E209. The Mg(2+) site is built by D244, E293, and D318. Substrate is bound by residues E293 and D318. The active-site Proton acceptor is K343. Substrate contacts are provided by residues 370–373 (SHRS) and K394.

Belongs to the enolase family. As to quaternary structure, homodimer. The cofactor is Mg(2+).

It localises to the cytoplasm. The enzyme catalyses (2R)-2-phosphoglycerate = phosphoenolpyruvate + H2O. It functions in the pathway carbohydrate degradation; glycolysis; pyruvate from D-glyceraldehyde 3-phosphate: step 4/5. The polypeptide is Enolase (ENO) (Fasciola hepatica (Liver fluke)).